The sequence spans 402 residues: Type II NADH:quinone oxidoreductase (402 aa).

Residues 12 to 16, 39 to 40, and Val83 contribute to the FAD site; these read GAGYA and NK. The active site involves Glu172. Residues Asp302, 319–320, and Lys379 contribute to the FAD site; that span reads AQ.

It belongs to the NADH dehydrogenase family. FAD serves as cofactor.

It localises to the cell membrane. It catalyses the reaction a quinone + NADH + H(+) = a quinol + NAD(+). Its function is as follows. Alternative, nonproton pumping NADH:quinone oxidoreductase that delivers electrons to the respiratory chain by oxidation of NADH and reduction of quinones, and contributes to the regeneration of NAD(+). In Staphylococcus epidermidis (strain ATCC 35984 / DSM 28319 / BCRC 17069 / CCUG 31568 / BM 3577 / RP62A), this protein is Type II NADH:quinone oxidoreductase.